A 250-amino-acid polypeptide reads, in one-letter code: Deoxynucleoside kinase (250 aa).

27–35 serves as a coordination point for ATP; that stretch reads GNIGSGKTT. Substrate contacts are provided by Glu-52, Tyr-70, and Gln-81. Glu-104 serves as the catalytic Proton acceptor. Substrate is bound by residues Arg-105 and Glu-172. Residues Ser-236, Ser-241, and Ser-243 each carry the phosphoserine modification.

Belongs to the DCK/DGK family. In terms of assembly, monomer.

The catalysed reaction is a 2'-deoxyribonucleoside + ATP = a 2'-deoxyribonucleoside 5'-phosphate + ADP + H(+). With respect to regulation, subject to feedback inhibition by dTTP. In terms of biological role, deoxyribonucleoside kinase that has a broad specificity phosphorylating thymidine, 2'-deoxyriboadenosine, 2'-deoxyribocytidine and 2'-deoxyriboguanosine. Specificity is higher for pyrimidine nucleosides. Several anti-viral and anti-cancer nucleoside analogs are also efficiently phosphorylated. The sequence is that of Deoxynucleoside kinase (dnk) from Drosophila melanogaster (Fruit fly).